The chain runs to 175 residues: Phytochrome-interacting ankyrin-repeat protein 1 (175 aa).

ANK repeat units lie at residues 30-59 (RGWT…DVNA), 67-96 (KGMT…NMEA), and 102-131 (CGWT…FLPD).

In terms of assembly, interacts with phytochrome A (PHYA), both in Pr and Pfr forms.

Its subcellular location is the cytoplasm. It is found in the nucleus. The protein resides in the mitochondrion. The sequence is that of Phytochrome-interacting ankyrin-repeat protein 1 from Arabidopsis thaliana (Mouse-ear cress).